Consider the following 537-residue polypeptide: Tyrosine-protein kinase Fyn (537 aa).

Residue Gly-2 is the site of N-myristoyl glycine attachment. S-palmitoyl cysteine attachment occurs at residues Cys-3 and Cys-6. Position 12 is a phosphothreonine; by PKC (Thr-12). Ser-21 and Ser-26 each carry phosphoserine. Positions 82-143 (TGVTLFVALY…PSNYVAPVDS (62 aa)) constitute an SH3 domain. Residues 149-246 (WYFGKLGRKD…GLCCRLVVPC (98 aa)) enclose the SH2 domain. Phosphotyrosine is present on Tyr-185. The Protein kinase domain occupies 271–524 (LQLIKRLGNG…YLQGFLEDYF (254 aa)). ATP is bound by residues 277 to 285 (LGNGQFGEV) and Lys-299. The active-site Proton acceptor is Asp-390. Tyr-420 is modified (phosphotyrosine; by autocatalysis). Phosphotyrosine; by CSK is present on Tyr-531.

This sequence belongs to the protein kinase superfamily. Tyr protein kinase family. SRC subfamily. Interacts (via its SH3 domain) with PIK3R1 and PRMT8. Interacts with FYB1, PAG1, and SH2D1A. Interacts with CD79A (tyrosine-phosphorylated form); the interaction increases FYN activity. Interacts (via SH2 domain) with CSF1R (tyrosine phosphorylated). Interacts with TOM1L1 (phosphorylated form). Interacts with KDR (tyrosine phosphorylated). Interacts (via SH3 domain) with KLHL2 (via N-terminus). Interacts with SH2D1A and SLAMF1. Interacts with ITCH; the interaction phosphorylates ITCH and negatively regulates its activity. Interacts with FASLG. Interacts with RUNX3. Interacts with KIT. Interacts with EPHA8; possible downstream effector of EPHA8 in regulation of cell adhesion. Interacts with PTK2/FAK1; this interaction leads to PTK2/FAK1 phosphorylation and activation. Interacts with CAV1; this interaction couples integrins to the Ras-ERK pathway. Interacts with UNC119. Interacts (via SH2 domain) with PTPRH (phosphorylated form). Interacts with PTPRO (phosphorylated form). Interacts with PTPRB (phosphorylated form). Interacts with FYB2. Interacts with DSCAM. Interacts with SKAP1 and FYB1; this interaction promotes the phosphorylation of CLNK. Interacts with NEDD9; in the presence of PTK2. The cofactor is Mn(2+). Autophosphorylated at Tyr-420. Phosphorylation on the C-terminal tail at Tyr-531 by CSK maintains the enzyme in an inactive state. PTPRC/CD45 dephosphorylates Tyr-531 leading to activation. Ultraviolet B (UVB) strongly increase phosphorylation at Thr-12 and kinase activity, and promotes translocation from the cytoplasm to the nucleus. Dephosphorylation at Tyr-420 by PTPN2 negatively regulates T-cell receptor signaling. Phosphorylated at tyrosine residues, which can be enhanced by NTN1. Post-translationally, palmitoylated. Palmitoylation at Cys-3 and Cys-6, probably by ZDHHC21, regulates subcellular location.

It localises to the cytoplasm. The protein localises to the nucleus. Its subcellular location is the cell membrane. The protein resides in the perikaryon. The enzyme catalyses L-tyrosyl-[protein] + ATP = O-phospho-L-tyrosyl-[protein] + ADP + H(+). Inhibited by phosphorylation of Tyr-531 by leukocyte common antigen and activated by dephosphorylation of this site. Its function is as follows. Non-receptor tyrosine-protein kinase that plays a role in many biological processes including regulation of cell growth and survival, cell adhesion, integrin-mediated signaling, cytoskeletal remodeling, cell motility, immune response and axon guidance. Inactive FYN is phosphorylated on its C-terminal tail within the catalytic domain. Following activation by PKA, the protein subsequently associates with PTK2/FAK1, allowing PTK2/FAK1 phosphorylation, activation and targeting to focal adhesions. Involved in the regulation of cell adhesion and motility through phosphorylation of CTNNB1 (beta-catenin) and CTNND1 (delta-catenin). Regulates cytoskeletal remodeling by phosphorylating several proteins including the actin regulator WAS and the microtubule-associated proteins MAP2 and MAPT. Promotes cell survival by phosphorylating AGAP2/PIKE-A and preventing its apoptotic cleavage. Participates in signal transduction pathways that regulate the integrity of the glomerular slit diaphragm (an essential part of the glomerular filter of the kidney) by phosphorylating several slit diaphragm components including NPHS1, KIRREL1 and TRPC6. Plays a role in neural processes by phosphorylating DPYSL2, a multifunctional adapter protein within the central nervous system, ARHGAP32, a regulator for Rho family GTPases implicated in various neural functions, and SNCA, a small pre-synaptic protein. Involved in reelin signaling by mediating phosphorylation of DAB1 following reelin (RELN)-binding to its receptor. Participates in the downstream signaling pathways that lead to T-cell differentiation and proliferation following T-cell receptor (TCR) stimulation. Phosphorylates PTK2B/PYK2 in response to T-cell receptor activation. Also participates in negative feedback regulation of TCR signaling through phosphorylation of PAG1, thereby promoting interaction between PAG1 and CSK and recruitment of CSK to lipid rafts. CSK maintains LCK and FYN in an inactive form. Promotes CD28-induced phosphorylation of VAV1. In mast cells, phosphorylates CLNK after activation of immunoglobulin epsilon receptor signaling. Can also promote CD244-mediated NK cell activation. This is Tyrosine-protein kinase Fyn from Sus scrofa (Pig).